We begin with the raw amino-acid sequence, 127 residues long: LIM domain-containing protein 2 (127 aa).

The residue at position 1 (methionine 1) is an N-acetylmethionine. A disordered region spans residues 1–24; the sequence is MFQAAGAAQATPSHDAKGGGSSTV. One can recognise an LIM zinc-binding domain in the interval 38 to 98; that stretch reads ETCAACQKTV…KPHFQQLFKS (61 aa). Cysteine 40, cysteine 43, histidine 61, cysteine 64, cysteine 67, cysteine 70, cysteine 88, and histidine 91 together coordinate Zn(2+).

As to quaternary structure, interacts with ILK.

It is found in the cytoplasm. The protein resides in the nucleus. Functionally, acts as an activator of the protein-kinase ILK, thereby regulating cell motility. This chain is LIM domain-containing protein 2, found in Homo sapiens (Human).